Here is a 165-residue protein sequence, read N- to C-terminus: MPPLATMSSPGSLLLLTPAVYQGIGRNRGGQSQEGQSISSSRSLKTKLSVSARAVSSCEASMRITCCANQTQTARRKSFSGPTSPPSGSVKEKVRSPKLDDGGTGFPPFRFGGGGGGGGGGGSNSAGGFILFVIVLLLDYLREFERNLQNGTRRGSDYDNGLAPQ.

A chloroplast-targeting transit peptide spans 1 to 51 (MPPLATMSSPGSLLLLTPAVYQGIGRNRGGQSQEGQSISSSRSLKTKLSVS). Positions 71–118 (TQTARRKSFSGPTSPPSGSVKEKVRSPKLDDGGTGFPPFRFGGGGGGG) are disordered. A compositionally biased stretch (low complexity) spans 79-89 (FSGPTSPPSGS). Positions 90–101 (VKEKVRSPKLDD) are enriched in basic and acidic residues.

As to quaternary structure, interacts with atpB. In terms of tissue distribution, highly expressed in leaves. Expressed in leaf sheaths. Expressed at low levels in stems.

It localises to the plastid. The protein localises to the chloroplast. Functionally, required for photosynthetic protein complex assembly in chloroplast thylakoid membranes during leaf development. Maintains the abundance of the core protein complex PsaA-PsaB of photosystem I (PSI) in the thylakoid membrane. May play a role in the efficient biogenesis of the chloroplast ATP synthase complex, possibly by interacting with the beta subunit atpB. The chain is Protein YELLOW LEAF 1, choloroplastic from Oryza sativa subsp. japonica (Rice).